Reading from the N-terminus, the 185-residue chain is Translocon-associated protein subunit gamma (185 aa).

Met-1 carries the N-acetylmethionine modification. The Lumenal segment spans residues 1 to 27; that stretch reads MAPKGGPKQQSEEDLLLQDFSRNLSAK. Ser-11 bears the Phosphoserine mark. The helical transmembrane segment at 28 to 48 threads the bilayer; the sequence is SSALFFGNAFIVSAIPIWLYW. At 49-54 the chain is on the cytoplasmic side; it reads RIWHMD. The helical transmembrane segment at 55 to 76 threads the bilayer; sequence LIQSAVLYSVMTLVSTYLVAFA. The Lumenal segment spans residues 77–135; it reads YKNVKFVLKHKVAQKREDAVSKEVTRKLSEADNRKMSRKEKDERILWKKNEVADYEATT. Ser-105 carries the post-translational modification Phosphoserine. The helical transmembrane segment at 136-157 threads the bilayer; sequence FSIFYNNTLFLVLVIVASFFIL. Residues 158 to 163 are Cytoplasmic-facing; that stretch reads KNFNPT. Residues 164-184 form a helical membrane-spanning segment; that stretch reads VNYILSISASSGLIALLSTGS.

This sequence belongs to the TRAP-gamma family. In terms of assembly, heterotetramer of TRAP-alpha, TRAP-beta, TRAP-delta and TRAP-gamma.

Its subcellular location is the endoplasmic reticulum membrane. Functionally, TRAP proteins are part of a complex whose function is to bind calcium to the ER membrane and thereby regulate the retention of ER resident proteins. The polypeptide is Translocon-associated protein subunit gamma (SSR3) (Bos taurus (Bovine)).